The sequence spans 659 residues: Cysteine-rich receptor-like protein kinase 5 (659 aa).

Residues 1–24 (MSAYTSLNFLFLLTFFIGSLRVSA) form the signal peptide. Topologically, residues 25 to 279 (QLQDPTYVGH…FPPGKGKNST (255 aa)) are extracellular. 2 consecutive Gnk2-homologous domains span residues 28-132 (DPTY…DRNI) and 138-243 (TTTT…VYPF). Asn175 and Asn277 each carry an N-linked (GlcNAc...) asparagine glycan. A helical membrane pass occupies residues 280 to 300 (VIIIAIVVPVAISVLICVAVF). Topologically, residues 301–659 (SFHASKRAKK…AASITILAPR (359 aa)) are cytoplasmic. A Protein kinase domain is found at 340–619 (FSMCNKLGQG…QMLTTSSIAL (280 aa)). ATP contacts are provided by residues 346 to 354 (LGQGGFGQV) and Lys368. At Tyr413 the chain carries Phosphotyrosine. Residue Asp465 is the Proton acceptor of the active site. Thr505 is modified (phosphothreonine). Residue Tyr513 is modified to Phosphotyrosine.

This sequence belongs to the protein kinase superfamily. Ser/Thr protein kinase family. CRK subfamily. Interacts with CRKIP1 (KAPP), CRKIP2 and CRKIP3, three kinase-associated type 2C proteins.

The protein resides in the membrane. The catalysed reaction is L-seryl-[protein] + ATP = O-phospho-L-seryl-[protein] + ADP + H(+). It carries out the reaction L-threonyl-[protein] + ATP = O-phospho-L-threonyl-[protein] + ADP + H(+). Functionally, involved in multiple distinct defense responses. May function as a disease resistance (R) protein. The chain is Cysteine-rich receptor-like protein kinase 5 (CRK5) from Arabidopsis thaliana (Mouse-ear cress).